The sequence spans 46 residues: METSSPALSVAIGVLAVLLGMTGFGVYQAFGPPSKALDDPFDDHED.

The helical transmembrane segment at 7 to 27 (ALSVAIGVLAVLLGMTGFGVY) threads the bilayer.

Belongs to the PsbN family.

The protein localises to the cellular thylakoid membrane. In terms of biological role, may play a role in photosystem I and II biogenesis. This Parasynechococcus marenigrum (strain WH8102) protein is Protein PsbN.